Consider the following 77-residue polypeptide: Translation initiation factor IF-1, chloroplastic (77 aa).

One can recognise an S1-like domain in the interval 1 to 72 (MKKQNLIEME…TKGRITYRLR (72 aa)).

Belongs to the IF-1 family. As to quaternary structure, component of the 30S ribosomal translation pre-initiation complex which assembles on the 30S ribosome in the order IF-2 and IF-3, IF-1 and N-formylmethionyl-tRNA(fMet); mRNA recruitment can occur at any time during PIC assembly.

The protein localises to the plastid. It localises to the chloroplast. Functionally, one of the essential components for the initiation of protein synthesis. Stabilizes the binding of IF-2 and IF-3 on the 30S subunit to which N-formylmethionyl-tRNA(fMet) subsequently binds. Helps modulate mRNA selection, yielding the 30S pre-initiation complex (PIC). Upon addition of the 50S ribosomal subunit IF-1, IF-2 and IF-3 are released leaving the mature 70S translation initiation complex. The protein is Translation initiation factor IF-1, chloroplastic of Zygnema circumcarinatum (Green alga).